The primary structure comprises 59 residues: MDAKLLEILVCPICKGPLVYKKEAGELVCKGDRLAFPVRDDIPVMLESDARELAADEDA.

It belongs to the UPF0434 family.

The protein is UPF0434 protein LHK_01103 of Laribacter hongkongensis (strain HLHK9).